We begin with the raw amino-acid sequence, 120 residues long: Large ribosomal subunit protein bL12 (120 aa).

This sequence belongs to the bacterial ribosomal protein bL12 family. Homodimer. Part of the ribosomal stalk of the 50S ribosomal subunit. Forms a multimeric L10(L12)X complex, where L10 forms an elongated spine to which 2 to 4 L12 dimers bind in a sequential fashion. Binds GTP-bound translation factors.

In terms of biological role, forms part of the ribosomal stalk which helps the ribosome interact with GTP-bound translation factors. Is thus essential for accurate translation. In Listeria innocua serovar 6a (strain ATCC BAA-680 / CLIP 11262), this protein is Large ribosomal subunit protein bL12.